The chain runs to 328 residues: Porphobilinogen deaminase (328 aa).

At Cys250 the chain carries S-(dipyrrolylmethanemethyl)cysteine.

The protein belongs to the HMBS family. As to quaternary structure, monomer. Dipyrromethane is required as a cofactor.

The catalysed reaction is 4 porphobilinogen + H2O = hydroxymethylbilane + 4 NH4(+). It functions in the pathway porphyrin-containing compound metabolism; protoporphyrin-IX biosynthesis; coproporphyrinogen-III from 5-aminolevulinate: step 2/4. In terms of biological role, tetrapolymerization of the monopyrrole PBG into the hydroxymethylbilane pre-uroporphyrinogen in several discrete steps. This chain is Porphobilinogen deaminase, found in Burkholderia ambifaria (strain ATCC BAA-244 / DSM 16087 / CCUG 44356 / LMG 19182 / AMMD) (Burkholderia cepacia (strain AMMD)).